We begin with the raw amino-acid sequence, 249 residues long: tRNA pseudouridine synthase A (249 aa).

Aspartate 53 (nucleophile) is an active-site residue. Tyrosine 111 is a substrate binding site.

Belongs to the tRNA pseudouridine synthase TruA family. In terms of assembly, homodimer.

It catalyses the reaction uridine(38/39/40) in tRNA = pseudouridine(38/39/40) in tRNA. Formation of pseudouridine at positions 38, 39 and 40 in the anticodon stem and loop of transfer RNAs. The sequence is that of tRNA pseudouridine synthase A from Streptococcus sanguinis (strain SK36).